The sequence spans 185 residues: Translation initiation factor IF-3 (185 aa).

This sequence belongs to the IF-3 family. In terms of assembly, monomer.

It localises to the cytoplasm. In terms of biological role, IF-3 binds to the 30S ribosomal subunit and shifts the equilibrium between 70S ribosomes and their 50S and 30S subunits in favor of the free subunits, thus enhancing the availability of 30S subunits on which protein synthesis initiation begins. In Streptococcus pneumoniae (strain Hungary19A-6), this protein is Translation initiation factor IF-3.